We begin with the raw amino-acid sequence, 114 residues long: MAEKIVTGDEVIVIRGKDRGARGRVRQNLPREDRVIVEGVNIVKKHQRAIPGVRQAGIIEMEAPIHVSKVMLICPHCGKPTRVGFRFTETGEKVRYCKKCQQVIEKPALHRRTK.

The protein belongs to the universal ribosomal protein uL24 family. Part of the 50S ribosomal subunit.

In terms of biological role, one of two assembly initiator proteins, it binds directly to the 5'-end of the 23S rRNA, where it nucleates assembly of the 50S subunit. Functionally, one of the proteins that surrounds the polypeptide exit tunnel on the outside of the subunit. The protein is Large ribosomal subunit protein uL24 of Thermomicrobium roseum (strain ATCC 27502 / DSM 5159 / P-2).